The following is a 261-amino-acid chain: Carnitinyl-CoA dehydratase (261 aa).

Residue E111 is the Nucleophile of the active site. Catalysis depends on E131, which acts as the Proton acceptor.

It belongs to the enoyl-CoA hydratase/isomerase family.

It catalyses the reaction (R)-carnitinyl-CoA = crotonobetainyl-CoA + H2O. It functions in the pathway amine and polyamine metabolism; carnitine metabolism. Catalyzes the reversible dehydration of L-carnitinyl-CoA to crotonobetainyl-CoA. The sequence is that of Carnitinyl-CoA dehydratase from Citrobacter koseri (strain ATCC BAA-895 / CDC 4225-83 / SGSC4696).